The following is a 473-amino-acid chain: tRNA modification GTPase MnmE (473 aa).

3 residues coordinate (6S)-5-formyl-5,6,7,8-tetrahydrofolate: R30, E95, and R134. In terms of domain architecture, TrmE-type G spans 230 to 394 (GVSTVIAGRP…LKLLMASMVE (165 aa)). Residues 240–245 (NAGKST), 259–265 (SHMPGTT), and 284–287 (DTAG) each bind GTP. Mg(2+) is bound by residues S244 and T265. Residue K473 participates in (6S)-5-formyl-5,6,7,8-tetrahydrofolate binding.

This sequence belongs to the TRAFAC class TrmE-Era-EngA-EngB-Septin-like GTPase superfamily. TrmE GTPase family. Homodimer. Heterotetramer of two MnmE and two MnmG subunits. It depends on K(+) as a cofactor.

It localises to the cytoplasm. In terms of biological role, exhibits a very high intrinsic GTPase hydrolysis rate. Involved in the addition of a carboxymethylaminomethyl (cmnm) group at the wobble position (U34) of certain tRNAs, forming tRNA-cmnm(5)s(2)U34. In Chlorobium luteolum (strain DSM 273 / BCRC 81028 / 2530) (Pelodictyon luteolum), this protein is tRNA modification GTPase MnmE.